A 338-amino-acid polypeptide reads, in one-letter code: Large ribosomal subunit protein uL3 (338 aa).

Disordered regions lie at residues 1 to 44 (MPQP…GFAG), 151 to 170 (AVPS…VGGG), 206 to 259 (VTKG…GQTG), and 312 to 338 (FRPA…SNQG). Residues 22–31 (SETPRFNSWP) are compositionally biased toward polar residues. A compositionally biased stretch (basic residues) spans 220–237 (GVQKRKGKHARQGWRRRI). Polar residues predominate over residues 247 to 259 (RVRSTVPQQGQTG).

Belongs to the universal ribosomal protein uL3 family. In terms of assembly, part of the 50S ribosomal subunit. Forms a cluster with proteins L14 and L24e. Interacts weakly with protein L13.

In terms of biological role, one of the primary rRNA binding proteins, it binds directly near the 3'-end of the 23S rRNA, where it nucleates assembly of the 50S subunit. This Haloarcula marismortui (strain ATCC 43049 / DSM 3752 / JCM 8966 / VKM B-1809) (Halobacterium marismortui) protein is Large ribosomal subunit protein uL3 (rpl3).